The primary structure comprises 873 residues: Zinc fingers and homeoboxes protein 1 (873 aa).

The segment at 1–63 (MASRRKSTTP…ESVDSDNQQN (63 aa)) is disordered. The span at 18 to 30 (QDPDLELISDLDE) shows a compositional bias: acidic residues. Thr-36 carries the post-translational modification Phosphothreonine. A phosphoserine mark is found at Ser-45, Ser-47, and Ser-48. C2H2-type zinc fingers lie at residues 70 to 93 (YECKYCTFQTPDLNMFTFHVDSEH) and 102 to 125 (YVCVECNFLTKRYDALSEHNLKYH). A Glycyl lysine isopeptide (Lys-Gly) (interchain with G-Cter in SUMO2) cross-link involves residue Lys-159. Position 202 is a phosphoserine (Ser-202). A disordered region spans residues 202 to 236 (SVEDVPEEKENEIKPDREEIVENPSSSASESNTST). The segment covering 212–221 (NEIKPDREEI) has biased composition (basic and acidic residues). A compositionally biased stretch (low complexity) spans 223–236 (ENPSSSASESNTST). Positions 272 to 432 (NSNLIPKVLI…QNNVQKSQVP (161 aa)) are required for dimerization. Residues 272-564 (NSNLIPKVLI…AQPKQSWNPF (293 aa)) are required for interaction with NFYA. The homeobox 1 DNA-binding region spans 284–346 (NSIPTYNAAL…LKHGVSWTPE (63 aa)). Glycyl lysine isopeptide (Lys-Gly) (interchain with G-Cter in SUMO2) cross-links involve residues Lys-441, Lys-454, Lys-485, and Lys-629. 2 consecutive DNA-binding regions (homeobox) follow at residues 464-526 (SFGI…KSNQ) and 569-630 (PQKF…EEKM). 2 disordered regions span residues 626–667 (KEEK…ICKK) and 732–769 (SSMNGLSSLRKRGRGRPKGRGRGRPRGRPRGSKRINNW). At Ser-648 the chain carries Phosphoserine. A DNA-binding region (homeobox 4) is located at residues 660–722 (STGKICKKTP…YAWKNGNLKW (63 aa)). A required for nuclear localization region spans residues 734–768 (MNGLSSLRKRGRGRPKGRGRGRPRGRPRGSKRINN). The segment covering 740-764 (LRKRGRGRPKGRGRGRPRGRPRGSK) has biased composition (basic residues). Ser-774 is subject to Phosphoserine. The homeobox 5 DNA-binding region spans 777-832 (KFKTGTAILKDYYLKHKFLNEQDLDELVNKSHMGYEQVREWFAERQRRSELGIELF). The disordered stretch occupies residues 829–873 (IELFEENEEEDEVIDDQEEDEEETDDSDTWEPPRHVKRKLSKSDD). Positions 831 to 857 (LFEENEEEDEVIDDQEEDEEETDDSDT) are enriched in acidic residues. The interval 831–873 (LFEENEEEDEVIDDQEEDEEETDDSDTWEPPRHVKRKLSKSDD) is required for repressor activity. Residues 863 to 873 (HVKRKLSKSDD) are compositionally biased toward basic residues.

This sequence belongs to the ZHX family. Forms homodimers. Also forms heterodimers with ZHX3 which is a prerequisite for repressor activity and with ZHX2. Interacts with NFYA. Interacts with ATF7IP.

It is found in the nucleus. Its function is as follows. Acts as a transcriptional repressor. In Gorilla gorilla gorilla (Western lowland gorilla), this protein is Zinc fingers and homeoboxes protein 1 (ZHX1).